Here is a 278-residue protein sequence, read N- to C-terminus: Putative transposase for insertion sequence element IS986/IS6110 (278 aa).

Residues 101–268 enclose the Integrase catalytic domain; it reads GPPAPNRLWV…VPPVELEAAY (168 aa).

In terms of biological role, involved in the transposition of the insertion sequence. The chain is Putative transposase for insertion sequence element IS986/IS6110 from Mycobacterium bovis (strain ATCC BAA-935 / AF2122/97).